Here is a 283-residue protein sequence, read N- to C-terminus: Pyridoxine/pyridoxal/pyridoxamine kinase (283 aa).

Substrate contacts are provided by S23 and H59. D125 lines the ATP pocket. Y136 provides a ligand contact to Mg(2+). ATP-binding positions include T157, E162, T195, 222–225 (HAHV), and T232. E162 is a Mg(2+) binding site. D234 serves as a coordination point for substrate.

It belongs to the pyridoxine kinase family. PdxK subfamily. In terms of assembly, homodimer. Mg(2+) serves as cofactor.

The catalysed reaction is pyridoxal + ATP = pyridoxal 5'-phosphate + ADP + H(+). It catalyses the reaction pyridoxine + ATP = pyridoxine 5'-phosphate + ADP + H(+). It carries out the reaction pyridoxamine + ATP = pyridoxamine 5'-phosphate + ADP + H(+). The protein operates within cofactor metabolism; pyridoxal 5'-phosphate salvage; pyridoxal 5'-phosphate from pyridoxal: step 1/1. Its pathway is cofactor metabolism; pyridoxal 5'-phosphate salvage; pyridoxine 5'-phosphate from pyridoxine: step 1/1. It participates in cofactor metabolism; pyridoxal 5'-phosphate salvage; pyridoxamine 5'-phosphate from pyridoxamine: step 1/1. In terms of biological role, B6-vitamer kinase involved in the salvage pathway of pyridoxal 5'-phosphate (PLP). Catalyzes the phosphorylation of pyridoxine (PN), pyridoxal (PL), and pyridoxamine (PM), forming their respective 5'-phosphorylated esters, i.e. PNP, PLP and PMP. The chain is Pyridoxine/pyridoxal/pyridoxamine kinase from Bordetella bronchiseptica (strain ATCC BAA-588 / NCTC 13252 / RB50) (Alcaligenes bronchisepticus).